The chain runs to 71 residues: Omega-conotoxin-like CnVIIF (71 aa).

Disulfide bonds link C46/C61, C53/C65, and C60/C70. C70 bears the Cysteine amide; in CnVIID mark.

Belongs to the conotoxin M superfamily. As to expression, expressed by the venom duct.

The protein localises to the secreted. Omega-conotoxins act at presynaptic membranes, they bind and block voltage-gated calcium channels (Cav). This is Omega-conotoxin-like CnVIIF from Conus consors (Singed cone).